Consider the following 1216-residue polypeptide: Probable cation-transporting ATPase 13A5 (1216 aa).

Helical transmembrane passes span 33 to 53, 198 to 218, 222 to 242, 401 to 421, and 433 to 453; these read RALC…MFYW, LLVK…LTLW, GYIE…VLSV, FMVF…GVYM, and MALI…LTIG. Asp-486 serves as the catalytic 4-aspartylphosphate intermediate. N-linked (GlcNAc...) asparagine glycosylation is found at Asn-650 and Asn-817. The Mg(2+) site is built by Asp-848 and Asp-852. The next 6 membrane-spanning stretches (helical) occupy residues 896–916, 933–950, 971–991, 1040–1060, 1075–1095, and 1113–1133; these read ALVS…IQFI, YLLQ…TMSI, LLLS…CTFL, FEGT…AFIF, LFSL…FCDF, and VSIL…EDAV.

This sequence belongs to the cation transport ATPase (P-type) (TC 3.A.3) family. Type V subfamily. Specifically expressed in brain and stomach.

Its subcellular location is the membrane. The enzyme catalyses ATP + H2O = ADP + phosphate + H(+). In Mus musculus (Mouse), this protein is Probable cation-transporting ATPase 13A5 (Atp13a5).